A 409-amino-acid polypeptide reads, in one-letter code: Autophagy-related protein 21 (409 aa).

WD repeat units follow at residues Met-1–Glu-35, Val-221–Ser-261, Thr-273–Lys-312, and Lys-361–Ile-402. A L/FRRG motif motif is present at residues Phe-269–Thr-273.

The protein belongs to the WD repeat PROPPIN family.

It is found in the cytoplasm. Its subcellular location is the membrane. The protein localises to the vacuole membrane. Required for cytoplasm to vacuole transport (Cvt) vesicles formation and mitophagy. Involved in binding of phosphatidylethanolamine to ATG8 and in recruitment of ATG8 and ATG5 to the pre-autophagosomal structure. Protects ATG8 from ARG4-mediated cleavage. The sequence is that of Autophagy-related protein 21 (ATG21) from Eremothecium gossypii (strain ATCC 10895 / CBS 109.51 / FGSC 9923 / NRRL Y-1056) (Yeast).